Consider the following 98-residue polypeptide: Large ribosomal subunit protein uL23 (98 aa).

It belongs to the universal ribosomal protein uL23 family. Part of the 50S ribosomal subunit. Contacts protein L29, and trigger factor when it is bound to the ribosome.

One of the early assembly proteins it binds 23S rRNA. One of the proteins that surrounds the polypeptide exit tunnel on the outside of the ribosome. Forms the main docking site for trigger factor binding to the ribosome. This Methylorubrum extorquens (strain CM4 / NCIMB 13688) (Methylobacterium extorquens) protein is Large ribosomal subunit protein uL23.